We begin with the raw amino-acid sequence, 852 residues long: Protein SBE22 (852 aa).

Residues 1 to 158 (MTSIQERGTS…ADKSKINTFP (158 aa)) form a disordered region. The segment covering 15-26 (SLKEGEASDRSS) has biased composition (basic and acidic residues). Polar residues predominate over residues 43–61 (PPSQTTLGRSRAGSNTMNK). A Phosphoserine modification is found at S72. Positions 74–96 (NLLSNMNCSDNGNGGNMLNSFVN) are enriched in polar residues. Residues 124 to 139 (TTEVFSSTSASSSLGD) are compositionally biased toward low complexity. S201 is modified (phosphoserine). Residues 206–248 (AAEKTMNKSRHSYQEQFSSKKSQSSLLNSKQRSRAKSQTCSST) form a disordered region. The span at 224–235 (SKKSQSSLLNSK) shows a compositional bias: low complexity. Phosphoserine is present on residues S459, S517, and S520.

It belongs to the SBE2 family.

Its subcellular location is the cytoplasm. The protein localises to the golgi apparatus. With SBE2, is involved in cell wall integrity and polarity processes like bud growth, through the transport of CHS3 and UTR2 to sites of growth. The polypeptide is Protein SBE22 (SBE22) (Saccharomyces cerevisiae (strain YJM789) (Baker's yeast)).